A 275-amino-acid chain; its full sequence is PE family protein PE8 (275 aa).

A PE domain is found at 5–93; sequence KTVPEELTAA…AGTYGVTESL (89 aa).

Belongs to the mycobacterial PE family. In terms of assembly, forms a heterodimer with PPE15. The dimer forms a 1:1:1 heterotrimeric complex with EspG5.

Its subcellular location is the secreted. The protein localises to the cell wall. In terms of biological role, promotes the intracellular survival of recombinant Mycobacterium within macrophages by regulating host inflammatory cytokines production and inhibiting cell late apoptosis. This chain is PE family protein PE8, found in Mycobacterium tuberculosis (strain ATCC 25618 / H37Rv).